Consider the following 271-residue polypeptide: Interleukin-1 alpha (271 aa).

The propeptide occupies 1–112; the sequence is MAKVPDMFED…DSEEEIIKPR (112 aa). An N6-acetyllysine modification is found at Lys-82. Residues 82-86 are nuclear localization signal (NLS); sequence KKRRL. Residue Ser-87 is modified to Phosphoserine. N-linked (GlcNAc...) asparagine glycosylation is found at Asn-102, Asn-121, Asn-137, and Asn-141.

It belongs to the IL-1 family. Monomer. Interacts with TMED10; the interaction mediates the translocation from the cytoplasm into the ERGIC (endoplasmic reticulum-Golgi intermediate compartment) and thereby secretion. Interacts with IL1R1. Interacts with S100A13; this interaction is the first step in the export of IL1A, followed by direct translocation of this complex across the plasma membrane. Post-translationally, acetylated within its nuclear localization sequence, which impacts subcellular localization. Proteolytic processed by CAPN1 in a calcium-dependent manner. Cleavage from 31 kDa precursor to 18 kDa biologically active molecules. In terms of processing, phosphorylated. Phosphorylation greatly enhances susceptibility to digestion and promotes the conversion of pre-IL1A alpha to the biologically active IL1A.

The protein resides in the nucleus. It localises to the cytoplasm. Its subcellular location is the secreted. In terms of biological role, cytokine constitutively present intracellularly in nearly all resting non-hematopoietic cells that plays an important role in inflammation and bridges the innate and adaptive immune systems. After binding to its receptor IL1R1 together with its accessory protein IL1RAP, forms the high affinity interleukin-1 receptor complex. Signaling involves the recruitment of adapter molecules such as MYD88, IRAK1 or IRAK4. In turn, mediates the activation of NF-kappa-B and the three MAPK pathways p38, p42/p44 and JNK pathways. Within the cell, acts as an alarmin and cell death results in its liberation in the extracellular space after disruption of the cell membrane to induce inflammation and alert the host to injury or damage. In addition to its role as a danger signal, which occurs when the cytokine is passively released by cell necrosis, directly senses DNA damage and acts as signal for genotoxic stress without loss of cell integrity. In Macaca fascicularis (Crab-eating macaque), this protein is Interleukin-1 alpha (IL1A).